Consider the following 526-residue polypeptide: Amine oxidase [flavin-containing] A (526 aa).

Met1 carries the post-translational modification N-acetylmethionine. At 1–497 (MTDLEKPSIT…HTFLERNLPS (497 aa)) the chain is on the cytoplasmic side. Ser383 carries the post-translational modification Phosphoserine. Cys406 carries the post-translational modification S-8alpha-FAD cysteine. A helical; Anchor for type IV membrane protein transmembrane segment spans residues 498-518 (VPGLLKITGFSTSVALLCFVL). Over 519–526 (YKFKQPQS) the chain is Mitochondrial intermembrane. The tract at residues 520–522 (KFK) is interaction with membrane phospholipid headgroups.

It belongs to the flavin monoamine oxidase family. As to quaternary structure, monomer, homo- or heterodimer (containing two subunits of similar size). Each subunit contains a covalently bound flavin. Enzymatically active as monomer. FAD serves as cofactor.

The protein localises to the mitochondrion outer membrane. The enzyme catalyses a secondary aliphatic amine + O2 + H2O = a primary amine + an aldehyde + H2O2. The catalysed reaction is a primary methyl amine + O2 + H2O = an aldehyde + H2O2 + NH4(+). It catalyses the reaction serotonin + O2 + H2O = (5-hydroxyindol-3-yl)acetaldehyde + H2O2 + NH4(+). It carries out the reaction (R)-adrenaline + O2 + H2O = (R)-3,4-dihydroxymandelaldehyde + methylamine + H2O2. The enzyme catalyses dopamine + O2 + H2O = 3,4-dihydroxyphenylacetaldehyde + H2O2 + NH4(+). The catalysed reaction is tyramine + O2 + H2O = (4-hydroxyphenyl)acetaldehyde + H2O2 + NH4(+). It catalyses the reaction (R)-noradrenaline + O2 + H2O = (R)-3,4-dihydroxymandelaldehyde + H2O2 + NH4(+). It carries out the reaction kynuramine + O2 + H2O = 3-(2-aminophenyl)-3-oxopropanal + H2O2 + NH4(+). The enzyme catalyses tryptamine + O2 + H2O = indole-3-acetaldehyde + H2O2 + NH4(+). The catalysed reaction is 2-phenylethylamine + O2 + H2O = 2-phenylacetaldehyde + H2O2 + NH4(+). Functionally, catalyzes the oxidative deamination of biogenic and xenobiotic amines and has important functions in the metabolism of neuroactive and vasoactive amines in the central nervous system and peripheral tissues. Preferentially oxidizes serotonin. Also catalyzes the oxidative deamination of kynuramine to 3-(2-aminophenyl)-3-oxopropanal that can spontaneously condense to 4-hydroxyquinoline. This chain is Amine oxidase [flavin-containing] A, found in Mus musculus (Mouse).